We begin with the raw amino-acid sequence, 273 residues long: Dermonecrotic toxin LvSicTox-alphaIC1ai (273 aa).

Residue histidine 5 is part of the active site. Mg(2+) contacts are provided by glutamate 25 and aspartate 27. The Nucleophile role is filled by histidine 41. 2 cysteine pairs are disulfide-bonded: cysteine 45-cysteine 51 and cysteine 47-cysteine 190. Aspartate 85 serves as a coordination point for Mg(2+).

The protein belongs to the arthropod phospholipase D family. Class II subfamily. The cofactor is Mg(2+). In terms of tissue distribution, expressed by the venom gland.

It localises to the secreted. The enzyme catalyses an N-(acyl)-sphingosylphosphocholine = an N-(acyl)-sphingosyl-1,3-cyclic phosphate + choline. It catalyses the reaction an N-(acyl)-sphingosylphosphoethanolamine = an N-(acyl)-sphingosyl-1,3-cyclic phosphate + ethanolamine. The catalysed reaction is a 1-acyl-sn-glycero-3-phosphocholine = a 1-acyl-sn-glycero-2,3-cyclic phosphate + choline. It carries out the reaction a 1-acyl-sn-glycero-3-phosphoethanolamine = a 1-acyl-sn-glycero-2,3-cyclic phosphate + ethanolamine. In terms of biological role, dermonecrotic toxins cleave the phosphodiester linkage between the phosphate and headgroup of certain phospholipids (sphingolipid and lysolipid substrates), forming an alcohol (often choline) and a cyclic phosphate. This toxin acts on sphingomyelin (SM). It may also act on ceramide phosphoethanolamine (CPE), lysophosphatidylcholine (LPC) and lysophosphatidylethanolamine (LPE), but not on lysophosphatidylserine (LPS), and lysophosphatidylglycerol (LPG). It acts by transphosphatidylation, releasing exclusively cyclic phosphate products as second products. Induces dermonecrosis, hemolysis, increased vascular permeability, edema, inflammatory response, and platelet aggregation. This chain is Dermonecrotic toxin LvSicTox-alphaIC1ai, found in Loxosceles variegata (Recluse spider).